Consider the following 508-residue polypeptide: Photosystem II CP47 reaction center protein (508 aa).

6 helical membrane passes run 21 to 36, 101 to 115, 140 to 156, 203 to 218, 237 to 252, and 457 to 472; these read SVHI…WAGS, IVFS…IWHW, GIHL…FGAF, IAAG…FHLS, VLSS…AFIV, and SFAL…HGAR.

This sequence belongs to the PsbB/PsbC family. PsbB subfamily. In terms of assembly, PSII is composed of 1 copy each of membrane proteins PsbA, PsbB, PsbC, PsbD, PsbE, PsbF, PsbH, PsbI, PsbJ, PsbK, PsbL, PsbM, PsbT, PsbX, PsbY, PsbZ, Psb30/Ycf12, at least 3 peripheral proteins of the oxygen-evolving complex and a large number of cofactors. It forms dimeric complexes. Requires Binds multiple chlorophylls. PSII binds additional chlorophylls, carotenoids and specific lipids. as cofactor.

It localises to the plastid. The protein localises to the chloroplast thylakoid membrane. Its function is as follows. One of the components of the core complex of photosystem II (PSII). It binds chlorophyll and helps catalyze the primary light-induced photochemical processes of PSII. PSII is a light-driven water:plastoquinone oxidoreductase, using light energy to abstract electrons from H(2)O, generating O(2) and a proton gradient subsequently used for ATP formation. The polypeptide is Photosystem II CP47 reaction center protein (Amborella trichopoda).